Here is a 399-residue protein sequence, read N- to C-terminus: Transmembrane protein 237 homolog (399 aa).

A compositionally biased stretch (pro residues) spans 1-11 (MPPTSRPVPPP). The tract at residues 1-158 (MPPTSRPVPP…PHDKRNMPAK (158 aa)) is disordered. 3 stretches are compositionally biased toward basic and acidic residues: residues 36–45 (NQQRRFRENN), 111–135 (EAAKHSREDPSGETVEVRRPNDPRR), and 144–158 (KSFRDPHDKRNMPAK). The next 4 membrane-spanning stretches (helical) occupy residues 222-242 (IANIIQGFLAGISVMLAIFSF), 256-276 (MSLPIHAGFMVAFTVGLVSAI), 301-321 (GLITFIVWFVGLVSTLLCIQL), and 343-363 (VFNVLRALTSGLGFLLLAFKP).

The protein belongs to the TMEM237 family.

Its subcellular location is the membrane. The protein localises to the cell projection. It is found in the cilium. Component of the transition zone in primary cilia. Required for ciliogenesis. The protein is Transmembrane protein 237 homolog of Caenorhabditis elegans.